A 200-amino-acid chain; its full sequence is NADH-quinone oxidoreductase subunit B (200 aa).

Residues C78, C79, C144, and C174 each contribute to the [4Fe-4S] cluster site.

The protein belongs to the complex I 20 kDa subunit family. As to quaternary structure, NDH-1 is composed of 14 different subunits. Subunits NuoB, C, D, E, F, and G constitute the peripheral sector of the complex. It depends on [4Fe-4S] cluster as a cofactor.

Its subcellular location is the cell membrane. It carries out the reaction a quinone + NADH + 5 H(+)(in) = a quinol + NAD(+) + 4 H(+)(out). Its function is as follows. NDH-1 shuttles electrons from NADH, via FMN and iron-sulfur (Fe-S) centers, to quinones in the respiratory chain. The immediate electron acceptor for the enzyme in this species is believed to be ubiquinone. Couples the redox reaction to proton translocation (for every two electrons transferred, four hydrogen ions are translocated across the cytoplasmic membrane), and thus conserves the redox energy in a proton gradient. This is NADH-quinone oxidoreductase subunit B from Dehalococcoides mccartyi (strain ATCC BAA-2100 / JCM 16839 / KCTC 5957 / BAV1).